Consider the following 662-residue polypeptide: Protein-arginine deiminase type-1 (662 aa).

Asn153, Asp155, Asp157, Asp164, Asp175, Asp178, Gln350, Glu352, Lys363, Asp370, Ser371, Asn374, Phe408, and Leu411 together coordinate Ca(2+). Cys644 serves as the catalytic Nucleophile.

This sequence belongs to the protein arginine deiminase family. As to quaternary structure, monomer. The cofactor is Ca(2+). Expressed only in the epidermis and uterus.

It localises to the cytoplasm. The enzyme catalyses L-arginyl-[protein] + H2O = L-citrullyl-[protein] + NH4(+). In terms of biological role, catalyzes the deimination of arginine residues of proteins. This is Protein-arginine deiminase type-1 (Padi1) from Mus musculus (Mouse).